A 429-amino-acid chain; its full sequence is Histidine--tRNA ligase (429 aa).

Belongs to the class-II aminoacyl-tRNA synthetase family. Homodimer.

It is found in the cytoplasm. The catalysed reaction is tRNA(His) + L-histidine + ATP = L-histidyl-tRNA(His) + AMP + diphosphate + H(+). The chain is Histidine--tRNA ligase from Streptococcus pneumoniae (strain Taiwan19F-14).